Consider the following 487-residue polypeptide: Solute carrier family 22 member 15-like (487 aa).

Residues 22–42 (AFLTLLQVYVACQSMLIVLVG) traverse the membrane as a helical segment. Asparagine 70 carries N-linked (GlcNAc...) asparagine glycosylation. The next 11 helical transmembrane spans lie at 90-110 (LASS…GPLS), 117-137 (PVYL…ALAP), 141-161 (VFAV…LVSF), 178-198 (SLTN…GFYI), 203-223 (TLAF…FLLP), 286-306 (ILLM…TLNA), 315-335 (LNVA…LYFI), 345-365 (ATAG…FLPE), 374-394 (TVLA…VYIY), 406-426 (AGLG…PFIP), and 435-455 (MPFV…LLLP).

The protein belongs to the major facilitator (TC 2.A.1) superfamily. Organic cation transporter (TC 2.A.1.19) family.

The protein localises to the membrane. In terms of biological role, probably transports organic cations. The sequence is that of Solute carrier family 22 member 15-like (slc22a15b) from Xenopus tropicalis (Western clawed frog).